The sequence spans 115 residues: Large ribosomal subunit protein bL19 (115 aa).

Belongs to the bacterial ribosomal protein bL19 family.

Functionally, this protein is located at the 30S-50S ribosomal subunit interface and may play a role in the structure and function of the aminoacyl-tRNA binding site. The chain is Large ribosomal subunit protein bL19 from Sodalis glossinidius (strain morsitans).